The primary structure comprises 262 residues: Cytochrome c oxidase subunit 3 (262 aa).

The next 7 membrane-spanning stretches (helical) occupy residues 13 to 33 (PWPL…VMYM), 38 to 58 (GGGL…YVWW), 82 to 102 (GMLL…WAFF), 134 to 154 (TIIL…ILAG), 159 to 179 (GIIS…FQAL), 200 to 220 (ATGF…VCLF), and 237 to 257 (AAAW…VCIY).

It belongs to the cytochrome c oxidase subunit 3 family. In terms of assembly, component of the cytochrome c oxidase (complex IV, CIV), a multisubunit enzyme composed of a catalytic core of 3 subunits and several supernumerary subunits. The complex exists as a monomer or a dimer and forms supercomplexes (SCs) in the inner mitochondrial membrane with ubiquinol-cytochrome c oxidoreductase (cytochrome b-c1 complex, complex III, CIII).

The protein resides in the mitochondrion inner membrane. The catalysed reaction is 4 Fe(II)-[cytochrome c] + O2 + 8 H(+)(in) = 4 Fe(III)-[cytochrome c] + 2 H2O + 4 H(+)(out). Its function is as follows. Component of the cytochrome c oxidase, the last enzyme in the mitochondrial electron transport chain which drives oxidative phosphorylation. The respiratory chain contains 3 multisubunit complexes succinate dehydrogenase (complex II, CII), ubiquinol-cytochrome c oxidoreductase (cytochrome b-c1 complex, complex III, CIII) and cytochrome c oxidase (complex IV, CIV), that cooperate to transfer electrons derived from NADH and succinate to molecular oxygen, creating an electrochemical gradient over the inner membrane that drives transmembrane transport and the ATP synthase. Cytochrome c oxidase is the component of the respiratory chain that catalyzes the reduction of oxygen to water. Electrons originating from reduced cytochrome c in the intermembrane space (IMS) are transferred via the dinuclear copper A center (CU(A)) of subunit 2 and heme A of subunit 1 to the active site in subunit 1, a binuclear center (BNC) formed by heme A3 and copper B (CU(B)). The BNC reduces molecular oxygen to 2 water molecules using 4 electrons from cytochrome c in the IMS and 4 protons from the mitochondrial matrix. This chain is Cytochrome c oxidase subunit 3 (COX3), found in Prototheca wickerhamii.